Reading from the N-terminus, the 168-residue chain is MATAPARRASSSRSSSEISRTTPSMGFQLGFVDDSNVFEWQVTIIGPPETLYDGGYFNAIMSFPQNYPNSPPTVRFTSEMWHPNVYPDGRVCISIHPPGDDPNGYELASERWTPVHTVESIVLSIISMLSSPNDESPANIEAAKDWREKQDEFKKKVRRAVRKSQEML.

Residues 1 to 21 (MATAPARRASSSRSSSEISRT) form a disordered region. A UBC core domain is found at 6–166 (ARRASSSRSS…VRRAVRKSQE (161 aa)). Cys-92 (glycyl thioester intermediate) is an active-site residue.

The protein belongs to the ubiquitin-conjugating enzyme family.

It catalyses the reaction S-ubiquitinyl-[E1 ubiquitin-activating enzyme]-L-cysteine + [E2 ubiquitin-conjugating enzyme]-L-cysteine = [E1 ubiquitin-activating enzyme]-L-cysteine + S-ubiquitinyl-[E2 ubiquitin-conjugating enzyme]-L-cysteine.. The protein operates within protein modification; protein ubiquitination. In terms of biological role, catalyzes the covalent attachment of ubiquitin to other proteins so as to signal them for selective protein degradation. Involved in the formation of multiubiquitin chains. The protein is Ubiquitin-conjugating enzyme E2 7 (UBC7) of Triticum aestivum (Wheat).